Reading from the N-terminus, the 320-residue chain is Protein EI24 homolog (320 aa).

The next 3 membrane-spanning stretches (helical) occupy residues 41-61, 94-114, and 175-195; these read QCFL…KWFI, GLLQ…SFIL, and ILLL…PYIG. An N-linked (GlcNAc...) asparagine glycan is attached at asparagine 217. 3 consecutive transmembrane segments (helical) span residues 227–247, 248–268, and 292–312; these read LDFF…CVLA, IFFL…PLFV, and LGKL…LSIF.

Belongs to the EI24 (TC 9.B.7) family.

The protein resides in the membrane. The chain is Protein EI24 homolog from Arabidopsis thaliana (Mouse-ear cress).